The sequence spans 347 residues: 3,4-dihydroxy-2-butanone 4-phosphate synthase (347 aa).

The segment at Met-1–Gln-200 is DHBP synthase. D-ribulose 5-phosphate contacts are provided by residues Arg-27–Glu-28, Asp-32, Arg-139–Thr-143, and Glu-163. Glu-28 contributes to the Mg(2+) binding site. Mg(2+) is bound at residue His-142. A GTP cyclohydrolase II-like region spans residues Asn-201–Leu-347.

It in the N-terminal section; belongs to the DHBP synthase family. The protein in the C-terminal section; belongs to the GTP cyclohydrolase II family. The cofactor is Mg(2+). Mn(2+) serves as cofactor.

It carries out the reaction D-ribulose 5-phosphate = (2S)-2-hydroxy-3-oxobutyl phosphate + formate + H(+). It functions in the pathway cofactor biosynthesis; riboflavin biosynthesis; 2-hydroxy-3-oxobutyl phosphate from D-ribulose 5-phosphate: step 1/1. In terms of biological role, catalyzes the conversion of D-ribulose 5-phosphate to formate and 3,4-dihydroxy-2-butanone 4-phosphate. This Wolinella succinogenes (strain ATCC 29543 / DSM 1740 / CCUG 13145 / JCM 31913 / LMG 7466 / NCTC 11488 / FDC 602W) (Vibrio succinogenes) protein is 3,4-dihydroxy-2-butanone 4-phosphate synthase (ribB).